The following is a 361-amino-acid chain: MYIKNLELINFRNYEILSLKLHSGINVFIGDNAQGKTNILESIYYCSIGKSHRTNKDKELIKWGARDAYISVYISKERLDKKIDIKIFKEGKKGVRVNSIKLKTISDLIGVFNVVMFSPEDLKIVKESPSYRRKFLDIELSKLNKKYYYSLVRYNKVLNERNTILRKWNSNTEVTEVYDHQLSKYGSYIIKERLKYIESLSIRGNKIHKDITSQKENIEFKYITSIKDLNNIQNDFYNLLRENVKKDFEKGSTSFGPHRDDFAVNINNTDTRTFGSQGQQRTAVLTIKLASLEIIKEQTGEYPVLLLDDVLSELDINRQKYILNSIREFQTIITGTGLIDIREYLDDHVKLFKVTNGTVNQ.

Residue 30–37 (GDNAQGKT) coordinates ATP.

The protein belongs to the RecF family.

It is found in the cytoplasm. Functionally, the RecF protein is involved in DNA metabolism; it is required for DNA replication and normal SOS inducibility. RecF binds preferentially to single-stranded, linear DNA. It also seems to bind ATP. The protein is DNA replication and repair protein RecF of Clostridium novyi (strain NT).